Consider the following 556-residue polypeptide: MTINNYDYDYLIIGSGFGGSVSACRLTEKGYSVAVMEMGRRWKAEDFAKNNWNTRRWIWRPGMKLFGYFNMRFFRHVTIICGNAVGGGSITYANTLLVPPEHIWDEGTWADAADWKNEMPQHYAEAERMLGVTDNKIFGPADHMLKKMGEAVGVGHTFKPTRVATFFPPEGEEGGKTYPDPYFNGEGPDRGTCTACGGCMTGCKHNAKNTLDKNYLYFAEKNGAKVYEETKVVDVKPLNGKADGSDGYEVTTGCSSSWFNKQRRTWRVRNVIFSASSLGTQEMLFRLKQSGSLPNISDDLGNRVRTNAESILGVRFFGKDVDMSKGVAIGSSIYIDHDTHIEATRYQSGSDAMGLMCTYMAKGKPGWTRIFFWLWALICHPFIFLRMSNPVSFARQTLIFLVMQTADASINMRLKRNWFWPFGKVLSSEGKKLPVYIPQANAFTEKVAKMFNGHPMTTITEILFNVPFTAHCMGGCAIASSPERGVVDGQNRVFNYKNLYVVDGSMLGANLGVNPSLTITALAERAMSYIPAKHTLEEQAYTQTHNEVLEAAKVSA.

Residues Gly18, Glu37, Gly88, Ala93, and Val235 each contribute to the FAD site. Catalysis depends on His471, which acts as the Proton acceptor. Gly504 is a binding site for FAD.

It belongs to the GMC oxidoreductase family. FAD serves as cofactor.

The catalysed reaction is cholesterol + O2 = cholest-5-en-3-one + H2O2. It carries out the reaction cholest-5-en-3-one = cholest-4-en-3-one. It functions in the pathway steroid metabolism; cholesterol degradation. Functionally, bifunctional enzyme that catalyzes the oxidation and isomerization of cholesterol to cholestenone (cholest-4-en-3-one), an initial step in the cholesterol degradation process. This Acinetobacter baumannii protein is Cholesterol oxidase.